Here is a 446-residue protein sequence, read N- to C-terminus: 3-phosphoshikimate 1-carboxyvinyltransferase (446 aa).

3-phosphoshikimate is bound by residues Lys35, Ser36, and Arg40. Lys35 contributes to the phosphoenolpyruvate binding site. Phosphoenolpyruvate-binding residues include Gly108 and Arg137. Residues Ser182, Gln184, Asp332, and Lys359 each contribute to the 3-phosphoshikimate site. Gln184 is a phosphoenolpyruvate binding site. The Proton acceptor role is filled by Asp332. Residues Arg363 and Arg405 each coordinate phosphoenolpyruvate.

Belongs to the EPSP synthase family. In terms of assembly, monomer.

The protein resides in the cytoplasm. It catalyses the reaction 3-phosphoshikimate + phosphoenolpyruvate = 5-O-(1-carboxyvinyl)-3-phosphoshikimate + phosphate. Its pathway is metabolic intermediate biosynthesis; chorismate biosynthesis; chorismate from D-erythrose 4-phosphate and phosphoenolpyruvate: step 6/7. In terms of biological role, catalyzes the transfer of the enolpyruvyl moiety of phosphoenolpyruvate (PEP) to the 5-hydroxyl of shikimate-3-phosphate (S3P) to produce enolpyruvyl shikimate-3-phosphate and inorganic phosphate. This is 3-phosphoshikimate 1-carboxyvinyltransferase from Acaryochloris marina (strain MBIC 11017).